The following is a 197-amino-acid chain: Ribonuclease HII (197 aa).

One can recognise an RNase H type-2 domain in the interval 10–197 (ELIAGVDEVG…APVRKLLNTL (188 aa)). A divalent metal cation is bound by residues D16, E17, and D108.

Belongs to the RNase HII family. Mn(2+) is required as a cofactor. The cofactor is Mg(2+).

It is found in the cytoplasm. It carries out the reaction Endonucleolytic cleavage to 5'-phosphomonoester.. Its function is as follows. Endonuclease that specifically degrades the RNA of RNA-DNA hybrids. This chain is Ribonuclease HII (rnhB), found in Pasteurella multocida (strain Pm70).